The chain runs to 305 residues: Putative lipid kinase SaurJH9_0749 (305 aa).

The 137-residue stretch at 3-139 (NKYTHGVLFY…YDVIKINNQY (137 aa)) folds into the DAGKc domain. Residues Ser44, 74–80 (GDGTVNE), and Thr101 contribute to the ATP site. Mg(2+)-binding residues include Ser220, Asp223, and Glu225. Glu281 (proton acceptor) is an active-site residue.

The protein belongs to the diacylglycerol/lipid kinase family. It depends on Mg(2+) as a cofactor.

Functionally, may catalyze the ATP-dependent phosphorylation of lipids other than diacylglycerol (DAG). This is Putative lipid kinase SaurJH9_0749 from Staphylococcus aureus (strain JH9).